Here is a 408-residue protein sequence, read N- to C-terminus: Multifunctional CCA protein (408 aa).

The ATP site is built by G8 and R11. The CTP site is built by G8 and R11. Mg(2+) contacts are provided by D21 and D23. ATP is bound by residues R91, R137, and R140. R91, R137, and R140 together coordinate CTP. The region spanning 228 to 329 is the HD domain; sequence SGVHTLMVLE…VKLFDKADFW (102 aa).

This sequence belongs to the tRNA nucleotidyltransferase/poly(A) polymerase family. Bacterial CCA-adding enzyme type 1 subfamily. Monomer. Can also form homodimers and oligomers. Requires Mg(2+) as cofactor. Ni(2+) serves as cofactor.

It catalyses the reaction a tRNA precursor + 2 CTP + ATP = a tRNA with a 3' CCA end + 3 diphosphate. The enzyme catalyses a tRNA with a 3' CCA end + 2 CTP + ATP = a tRNA with a 3' CCACCA end + 3 diphosphate. Functionally, catalyzes the addition and repair of the essential 3'-terminal CCA sequence in tRNAs without using a nucleic acid template. Adds these three nucleotides in the order of C, C, and A to the tRNA nucleotide-73, using CTP and ATP as substrates and producing inorganic pyrophosphate. tRNA 3'-terminal CCA addition is required both for tRNA processing and repair. Also involved in tRNA surveillance by mediating tandem CCA addition to generate a CCACCA at the 3' terminus of unstable tRNAs. While stable tRNAs receive only 3'-terminal CCA, unstable tRNAs are marked with CCACCA and rapidly degraded. This chain is Multifunctional CCA protein, found in Shewanella piezotolerans (strain WP3 / JCM 13877).